Here is a 140-residue protein sequence, read N- to C-terminus: Nucleoside diphosphate kinase (140 aa).

K11, F59, R87, T93, R104, and N114 together coordinate ATP. The active-site Pros-phosphohistidine intermediate is H117.

Belongs to the NDK family. Homotetramer. The cofactor is Mg(2+).

It is found in the cytoplasm. The enzyme catalyses a 2'-deoxyribonucleoside 5'-diphosphate + ATP = a 2'-deoxyribonucleoside 5'-triphosphate + ADP. It carries out the reaction a ribonucleoside 5'-diphosphate + ATP = a ribonucleoside 5'-triphosphate + ADP. Major role in the synthesis of nucleoside triphosphates other than ATP. The ATP gamma phosphate is transferred to the NDP beta phosphate via a ping-pong mechanism, using a phosphorylated active-site intermediate. This is Nucleoside diphosphate kinase from Methylobacterium nodulans (strain LMG 21967 / CNCM I-2342 / ORS 2060).